The chain runs to 337 residues: Ketol-acid reductoisomerase (NADP(+)) (337 aa).

Residues 3 to 183 (VEMFYDDDAD…GGARAGVIKT (181 aa)) enclose the KARI N-terminal Rossmann domain. Residues 26-29 (YGSQ), lysine 49, serine 52, serine 54, and 84-87 (DTAQ) each bind NADP(+). The active site involves histidine 109. Residue glycine 135 coordinates NADP(+). One can recognise a KARI C-terminal knotted domain in the interval 184 to 329 (TFKEETETDL…KKLRDLMSWV (146 aa)). Positions 192, 196, 228, and 232 each coordinate Mg(2+). Serine 253 provides a ligand contact to substrate.

It belongs to the ketol-acid reductoisomerase family. Mg(2+) serves as cofactor.

The enzyme catalyses (2R)-2,3-dihydroxy-3-methylbutanoate + NADP(+) = (2S)-2-acetolactate + NADPH + H(+). It carries out the reaction (2R,3R)-2,3-dihydroxy-3-methylpentanoate + NADP(+) = (S)-2-ethyl-2-hydroxy-3-oxobutanoate + NADPH + H(+). Its pathway is amino-acid biosynthesis; L-isoleucine biosynthesis; L-isoleucine from 2-oxobutanoate: step 2/4. The protein operates within amino-acid biosynthesis; L-valine biosynthesis; L-valine from pyruvate: step 2/4. In terms of biological role, involved in the biosynthesis of branched-chain amino acids (BCAA). Catalyzes an alkyl-migration followed by a ketol-acid reduction of (S)-2-acetolactate (S2AL) to yield (R)-2,3-dihydroxy-isovalerate. In the isomerase reaction, S2AL is rearranged via a Mg-dependent methyl migration to produce 3-hydroxy-3-methyl-2-ketobutyrate (HMKB). In the reductase reaction, this 2-ketoacid undergoes a metal-dependent reduction by NADPH to yield (R)-2,3-dihydroxy-isovalerate. The chain is Ketol-acid reductoisomerase (NADP(+)) from Mycobacterium sp. (strain JLS).